Consider the following 160-residue polypeptide: Protein CrtK (160 aa).

The next 5 helical transmembrane spans lie at 3–23 (LTLF…GAIF), 37–57 (WVPP…LMSI), 76–96 (LAFW…FFGL), 101–121 (GGML…VLFW), and 129–149 (LMFV…FSVW).

Belongs to the TspO/BZRP family.

It localises to the cell inner membrane. It functions in the pathway carotenoid biosynthesis; spheroidene biosynthesis. This is Protein CrtK (crtK) from Rhodobacter capsulatus (strain ATCC BAA-309 / NBRC 16581 / SB1003).